Here is a 276-residue protein sequence, read N- to C-terminus: Stathmin domain-containing protein 1 (276 aa).

Disordered stretches follow at residues 1–40 (MGCGPSQPAEDRRRVRAPKKGWKEEFKADVSVPHTGENCS), 61–106 (VQMG…RERQ), and 226–250 (GFEPSDLQGGKPLKRKKSKCDATLI). Gly2 is lipidated: N-myristoyl glycine. Composition is skewed to polar residues over residues 68–78 (GTISENSPSPS) and 87–100 (DLVTNGLINKPQSL). The region spanning 118 to 244 (QGIIQSHSKV…GKPLKRKKSK (127 aa)) is the SLD domain.

The protein is Stathmin domain-containing protein 1 (STMND1) of Homo sapiens (Human).